The following is a 111-amino-acid chain: ATP synthase subunit c (111 aa).

The next 2 membrane-spanning stretches (helical) occupy residues 38-58 (GLGVVAVGAGLAMIGAIGSGL) and 89-109 (AGIAETASIYSFIVALLLIFV).

This sequence belongs to the ATPase C chain family. As to quaternary structure, F-type ATPases have 2 components, F(1) - the catalytic core - and F(0) - the membrane proton channel. F(1) has five subunits: alpha(3), beta(3), gamma(1), delta(1), epsilon(1). F(0) has three main subunits: a(1), b(2) and c(10-14). The alpha and beta chains form an alternating ring which encloses part of the gamma chain. F(1) is attached to F(0) by a central stalk formed by the gamma and epsilon chains, while a peripheral stalk is formed by the delta and b chains.

It localises to the cell membrane. In terms of biological role, f(1)F(0) ATP synthase produces ATP from ADP in the presence of a proton or sodium gradient. F-type ATPases consist of two structural domains, F(1) containing the extramembraneous catalytic core and F(0) containing the membrane proton channel, linked together by a central stalk and a peripheral stalk. During catalysis, ATP synthesis in the catalytic domain of F(1) is coupled via a rotary mechanism of the central stalk subunits to proton translocation. Key component of the F(0) channel; it plays a direct role in translocation across the membrane. A homomeric c-ring of between 10-14 subunits forms the central stalk rotor element with the F(1) delta and epsilon subunits. In Mycoplasmopsis synoviae (strain 53) (Mycoplasma synoviae), this protein is ATP synthase subunit c.